The chain runs to 335 residues: tRNA N6-adenosine threonylcarbamoyltransferase (335 aa).

Residues His111 and His115 each contribute to the Fe cation site. Substrate-binding positions include 133–137, Asp166, Gly179, Asp183, and Asn268; that span reads IISGG. Residue Asp296 coordinates Fe cation.

The protein belongs to the KAE1 / TsaD family. The cofactor is Fe(2+).

It localises to the cytoplasm. It carries out the reaction L-threonylcarbamoyladenylate + adenosine(37) in tRNA = N(6)-L-threonylcarbamoyladenosine(37) in tRNA + AMP + H(+). Its function is as follows. Required for the formation of a threonylcarbamoyl group on adenosine at position 37 (t(6)A37) in tRNAs that read codons beginning with adenine. Is involved in the transfer of the threonylcarbamoyl moiety of threonylcarbamoyl-AMP (TC-AMP) to the N6 group of A37, together with TsaE and TsaB. TsaD likely plays a direct catalytic role in this reaction. This is tRNA N6-adenosine threonylcarbamoyltransferase from Aquifex aeolicus (strain VF5).